Reading from the N-terminus, the 184-residue chain is MASPAASSVRPPRPKKEPQTLVIPKNAAEEQKLKLERLMKNPDKAVPIPEKMSEWAPRPPPEFVRDVMGSSAGAGSGEFHVYRHLRRREYQRQDYMDAMAEKQKLDAEFQKRLEKNKIAAEEQTAKRRKKRQKLKEKKLLAKKMKLEQKKQEGPGQPKEQGSSSSAEASGTEEEEEVPSFTMGR.

Residues 1-10 are compositionally biased toward low complexity; it reads MASPAASSVR. 3 disordered regions span residues 1-20, 37-76, and 120-184; these read MASP…EPQT, RLMK…GAGS, and AEEQ…TMGR. The interval 1–50 is interaction with EIF2AK2; it reads MASPAASSVRPPRPKKEPQTLVIPKNAAEEQKLKLERLMKNPDKAVPIPE. Residues 51-143 are required for RNA-binding; that stretch reads KMSEWAPRPP…LKEKKLLAKK (93 aa). The stretch at 91–152 forms a coiled coil; it reads QRQDYMDAMA…KMKLEQKKQE (62 aa). The segment at 126 to 138 is required for nuclear localization; it reads KRRKKRQKLKEKK. A compositionally biased stretch (basic residues) spans 126–143; that stretch reads KRRKKRQKLKEKKLLAKK. Positions 159–169 are enriched in low complexity; it reads EQGSSSSAEAS.

Belongs to the PRKRIP1 family. In terms of assembly, component of the pre-catalytic and post-catalytic spliceosome complexes. Interacts with EIF2AK2.

The protein localises to the nucleus. Its subcellular location is the nucleolus. In terms of biological role, required for pre-mRNA splicing as component of the spliceosome. Binds double-stranded RNA. Inhibits EIF2AK2 kinase activity. This chain is PRKR-interacting protein 1 (PRKRIP1), found in Pongo abelii (Sumatran orangutan).